Consider the following 187-residue polypeptide: MNLTNHFLVAMPGMKDPYFQNSVIYVCEHNEEGAMGLMINAPVDITVGNMLKQVDVQPVHPRLFEASLDRPVYNGGPISEDRGFILHKPKDYYESSIQMTDDLAVTTSRDILSVLGTEAEPSDYLVALGYSGWSAGQLENELVENSWLTIEATPEIIFDTPITERWKKAVEKLGIDPSQLSADAGHA.

The protein belongs to the UPF0301 (AlgH) family.

The sequence is that of UPF0301 protein VP2612 from Vibrio parahaemolyticus serotype O3:K6 (strain RIMD 2210633).